A 622-amino-acid polypeptide reads, in one-letter code: Low affinity potassium transport system protein Kup (622 aa).

Helical transmembrane passes span 9 to 29 (LSAVTLAAIGVVYGDIGTSPL), 46 to 66 (PDVVFGFLSLIFWMLILVVSV), 101 to 121 (ILVVLGLIGGSFFYGEVVITP), 137 to 157 (PALDPYIVPCSIAVLTLLFVI), 165 to 185 (VGKLFAPVMLVWFLTLALLGL), 213 to 233 (VSFFALGAVVLAITGVEALYA), 247 to 267 (WFTVVLPSLVLNYFGQGALLL), 276 to 296 (PFFLLAPDWALIPLLILATLA), 337 to 357 (IYIPVINWTLYLAVVLVIIGF), 363 to 383 (LAAAYGIAVTGTMVITSILFC), 395 to 415 (FLVAFLLMVLLIIDIPMFSAN), and 416 to 436 (VLKLFSGGWLPLSLGLVMFII).

It belongs to the HAK/KUP transporter (TC 2.A.72) family.

Its subcellular location is the cell inner membrane. It carries out the reaction K(+)(in) + H(+)(in) = K(+)(out) + H(+)(out). In terms of biological role, responsible for the low-affinity transport of potassium into the cell. Likely operates as a K(+):H(+) symporter. In Yersinia pseudotuberculosis serotype O:1b (strain IP 31758), this protein is Low affinity potassium transport system protein Kup.